Consider the following 144-residue polypeptide: Large-conductance mechanosensitive channel (144 aa).

Transmembrane regions (helical) follow at residues 16–36 and 86–106; these read VIDL…VDSV and GNFL…FLMV.

The protein belongs to the MscL family. In terms of assembly, homopentamer.

It localises to the cell inner membrane. Its function is as follows. Channel that opens in response to stretch forces in the membrane lipid bilayer. May participate in the regulation of osmotic pressure changes within the cell. The polypeptide is Large-conductance mechanosensitive channel (Cupriavidus pinatubonensis (strain JMP 134 / LMG 1197) (Cupriavidus necator (strain JMP 134))).